Reading from the N-terminus, the 504-residue chain is ATP synthase subunit alpha 1 (504 aa).

172–179 (GDRQTGKT) contacts ATP.

The protein belongs to the ATPase alpha/beta chains family. F-type ATPases have 2 components, CF(1) - the catalytic core - and CF(0) - the membrane proton channel. CF(1) has five subunits: alpha(3), beta(3), gamma(1), delta(1), epsilon(1). CF(0) has three main subunits: a(1), b(2) and c(9-12). The alpha and beta chains form an alternating ring which encloses part of the gamma chain. CF(1) is attached to CF(0) by a central stalk formed by the gamma and epsilon chains, while a peripheral stalk is formed by the delta and b chains.

It is found in the cell inner membrane. It carries out the reaction ATP + H2O + 4 H(+)(in) = ADP + phosphate + 5 H(+)(out). Its function is as follows. Produces ATP from ADP in the presence of a proton gradient across the membrane. The alpha chain is a regulatory subunit. This chain is ATP synthase subunit alpha 1, found in Rhodopirellula baltica (strain DSM 10527 / NCIMB 13988 / SH1).